The primary structure comprises 114 residues: uncharacterized protein (114 aa).

Residues 13-30 (LYISAAGIASIYVVKTIV) traverse the membrane as a helical segment.

The protein localises to the mitochondrion outer membrane. This is an uncharacterized protein from Saccharomyces cerevisiae (strain ATCC 204508 / S288c) (Baker's yeast).